We begin with the raw amino-acid sequence, 1703 residues long: Pecanex-like protein 1 (1703 aa).

The next 2 helical transmembrane spans lie at 31-53 and 57-74; these read VNAL…YMAL and MVIV…FLLL. Over residues 91–100 the composition is skewed to basic and acidic residues; the sequence is VEHQTRESKG. The segment at 91–126 is disordered; it reads VEHQTRESKGSRGGTGGANDPVTRREDSNGLGDPGG. A glycan (N-linked (GlcNAc...) asparagine) is linked at Asn256. The next 3 membrane-spanning stretches (helical) occupy residues 416–438, 477–499, and 525–547; these read VLAV…HGFF, AYSR…YGSL, and LVIV…QVNT. An N-linked (GlcNAc...) asparagine glycan is attached at Asn564. Helical transmembrane passes span 569–591, 603–622, 675–697, and 704–721; these read LLSA…CFCY, IPVL…YHLS, LIVC…FIAL, and VLYG…YLLP. Residues Asn988, Asn1129, and Asn1391 are each glycosylated (N-linked (GlcNAc...) asparagine). Disordered regions lie at residues 1475–1556 and 1577–1598; these read VQSG…HSIP and TDPL…PTHA. Composition is skewed to low complexity over residues 1485-1510 and 1518-1556; these read ARAS…RTST and RSST…HSIP. Positions 1582–1591 are enriched in basic residues; that stretch reads QHHHPHHHPQ. Asn1622 is a glycosylation site (N-linked (GlcNAc...) asparagine).

The protein belongs to the pecanex family.

It is found in the membrane. The chain is Pecanex-like protein 1 from Takifugu rubripes (Japanese pufferfish).